The chain runs to 139 residues: Putative pre-16S rRNA nuclease (139 aa).

The protein belongs to the YqgF nuclease family.

It localises to the cytoplasm. In terms of biological role, could be a nuclease involved in processing of the 5'-end of pre-16S rRNA. This is Putative pre-16S rRNA nuclease from Caldanaerobacter subterraneus subsp. tengcongensis (strain DSM 15242 / JCM 11007 / NBRC 100824 / MB4) (Thermoanaerobacter tengcongensis).